A 113-amino-acid polypeptide reads, in one-letter code: Large ribosomal subunit protein uL22 (113 aa).

The protein belongs to the universal ribosomal protein uL22 family. In terms of assembly, part of the 50S ribosomal subunit.

This protein binds specifically to 23S rRNA; its binding is stimulated by other ribosomal proteins, e.g. L4, L17, and L20. It is important during the early stages of 50S assembly. It makes multiple contacts with different domains of the 23S rRNA in the assembled 50S subunit and ribosome. Its function is as follows. The globular domain of the protein is located near the polypeptide exit tunnel on the outside of the subunit, while an extended beta-hairpin is found that lines the wall of the exit tunnel in the center of the 70S ribosome. This is Large ribosomal subunit protein uL22 from Magnetococcus marinus (strain ATCC BAA-1437 / JCM 17883 / MC-1).